We begin with the raw amino-acid sequence, 71 residues long: Large ribosomal subunit protein bL31 (71 aa).

Zn(2+) contacts are provided by Cys16, Cys18, Cys37, and Cys40.

It belongs to the bacterial ribosomal protein bL31 family. Type A subfamily. Part of the 50S ribosomal subunit. Requires Zn(2+) as cofactor.

Binds the 23S rRNA. The polypeptide is Large ribosomal subunit protein bL31 (Solidesulfovibrio magneticus (strain ATCC 700980 / DSM 13731 / RS-1) (Desulfovibrio magneticus)).